We begin with the raw amino-acid sequence, 312 residues long: Holliday junction branch migration complex subunit RuvB (312 aa).

A large ATPase domain (RuvB-L) region spans residues 1-168; it reads MKTNNEFRPQ…FGHVFYLSEY (168 aa). Residues arginine 8, glycine 49, lysine 52, threonine 53, threonine 54, 115-117, arginine 158, tyrosine 168, and arginine 206 contribute to the ATP site; that span reads EDF. Threonine 53 contributes to the Mg(2+) binding site. Positions 169-234 are small ATPAse domain (RuvB-S); sequence ETSEIAAIIL…NIKNIFEKIQ (66 aa). The segment at 237-312 is head domain (RuvB-H); it reads DFGLEEQDIN…EFLKNNQLIK (76 aa). Positions 290 and 295 each coordinate DNA.

This sequence belongs to the RuvB family. In terms of assembly, homohexamer. Forms an RuvA(8)-RuvB(12)-Holliday junction (HJ) complex. HJ DNA is sandwiched between 2 RuvA tetramers; dsDNA enters through RuvA and exits via RuvB. An RuvB hexamer assembles on each DNA strand where it exits the tetramer. Each RuvB hexamer is contacted by two RuvA subunits (via domain III) on 2 adjacent RuvB subunits; this complex drives branch migration. In the full resolvosome a probable DNA-RuvA(4)-RuvB(12)-RuvC(2) complex forms which resolves the HJ.

The protein localises to the cytoplasm. The catalysed reaction is ATP + H2O = ADP + phosphate + H(+). The RuvA-RuvB-RuvC complex processes Holliday junction (HJ) DNA during genetic recombination and DNA repair, while the RuvA-RuvB complex plays an important role in the rescue of blocked DNA replication forks via replication fork reversal (RFR). RuvA specifically binds to HJ cruciform DNA, conferring on it an open structure. The RuvB hexamer acts as an ATP-dependent pump, pulling dsDNA into and through the RuvAB complex. RuvB forms 2 homohexamers on either side of HJ DNA bound by 1 or 2 RuvA tetramers; 4 subunits per hexamer contact DNA at a time. Coordinated motions by a converter formed by DNA-disengaged RuvB subunits stimulates ATP hydrolysis and nucleotide exchange. Immobilization of the converter enables RuvB to convert the ATP-contained energy into a lever motion, pulling 2 nucleotides of DNA out of the RuvA tetramer per ATP hydrolyzed, thus driving DNA branch migration. The RuvB motors rotate together with the DNA substrate, which together with the progressing nucleotide cycle form the mechanistic basis for DNA recombination by continuous HJ branch migration. Branch migration allows RuvC to scan DNA until it finds its consensus sequence, where it cleaves and resolves cruciform DNA. In Ureaplasma urealyticum serovar 10 (strain ATCC 33699 / Western), this protein is Holliday junction branch migration complex subunit RuvB.